A 337-amino-acid polypeptide reads, in one-letter code: tRNA N6-adenosine threonylcarbamoyltransferase (337 aa).

H111 and H115 together coordinate Fe cation. Substrate is bound by residues 134–138 (LVSGG), D167, G180, and N272. D300 is a binding site for Fe cation.

Belongs to the KAE1 / TsaD family. Fe(2+) serves as cofactor.

The protein localises to the cytoplasm. It catalyses the reaction L-threonylcarbamoyladenylate + adenosine(37) in tRNA = N(6)-L-threonylcarbamoyladenosine(37) in tRNA + AMP + H(+). Functionally, required for the formation of a threonylcarbamoyl group on adenosine at position 37 (t(6)A37) in tRNAs that read codons beginning with adenine. Is involved in the transfer of the threonylcarbamoyl moiety of threonylcarbamoyl-AMP (TC-AMP) to the N6 group of A37, together with TsaE and TsaB. TsaD likely plays a direct catalytic role in this reaction. In Escherichia coli (strain SMS-3-5 / SECEC), this protein is tRNA N6-adenosine threonylcarbamoyltransferase.